The chain runs to 101 residues: Putative pterin-4-alpha-carbinolamine dehydratase (101 aa).

Belongs to the pterin-4-alpha-carbinolamine dehydratase family.

It catalyses the reaction (4aS,6R)-4a-hydroxy-L-erythro-5,6,7,8-tetrahydrobiopterin = (6R)-L-erythro-6,7-dihydrobiopterin + H2O. This Rhizobium rhizogenes (strain K84 / ATCC BAA-868) (Agrobacterium radiobacter) protein is Putative pterin-4-alpha-carbinolamine dehydratase.